The following is a 198-amino-acid chain: Recombination protein RecR (198 aa).

The C4-type zinc finger occupies 57–72 (CSICGNLTDEDPCAIC). In terms of domain architecture, Toprim spans 80–175 (STILIVEDSR…KVTRLARGLA (96 aa)).

The protein belongs to the RecR family.

In terms of biological role, may play a role in DNA repair. It seems to be involved in an RecBC-independent recombinational process of DNA repair. It may act with RecF and RecO. This chain is Recombination protein RecR, found in Streptococcus gordonii (strain Challis / ATCC 35105 / BCRC 15272 / CH1 / DL1 / V288).